The following is a 761-amino-acid chain: 1,4-alpha-glucan branching enzyme GlgB (761 aa).

Residue Asp-431 is the Nucleophile of the active site. Glu-484 acts as the Proton donor in catalysis.

The protein belongs to the glycosyl hydrolase 13 family. GlgB subfamily. As to quaternary structure, monomer.

The catalysed reaction is Transfers a segment of a (1-&gt;4)-alpha-D-glucan chain to a primary hydroxy group in a similar glucan chain.. The protein operates within glycan biosynthesis; glycogen biosynthesis. Its function is as follows. Catalyzes the formation of the alpha-1,6-glucosidic linkages in glycogen by scission of a 1,4-alpha-linked oligosaccharide from growing alpha-1,4-glucan chains and the subsequent attachment of the oligosaccharide to the alpha-1,6 position. The polypeptide is 1,4-alpha-glucan branching enzyme GlgB (Synechococcus sp. (strain WH7803)).